Here is a 193-residue protein sequence, read N- to C-terminus: Resuscitation-promoting factor Rpf1 (193 aa).

Positions methionine 1–alanine 35 are cleaved as a signal peptide.

This sequence belongs to the transglycosylase family. Rpf subfamily.

It localises to the secreted. Functionally, factor that stimulates resuscitation of dormant cells. Has peptidoglycan (PG) hydrolytic activity. Active in the pM concentration range. Has little to no effect on actively-growing cells. PG fragments could either directly activate the resuscitation pathway of dormant bacteria or serve as a substrate for endogenous Rpf, resulting in low molecular weight products with resuscitation activity. The protein is Resuscitation-promoting factor Rpf1 (rpf1) of Corynebacterium glutamicum (strain ATCC 13032 / DSM 20300 / JCM 1318 / BCRC 11384 / CCUG 27702 / LMG 3730 / NBRC 12168 / NCIMB 10025 / NRRL B-2784 / 534).